A 425-amino-acid chain; its full sequence is Serine--tRNA ligase (425 aa).

233–235 lines the L-serine pocket; it reads TAE. Residue 264-266 coordinates ATP; the sequence is RRE. E287 is a binding site for L-serine. 351–354 lines the ATP pocket; sequence EISS. S385 contributes to the L-serine binding site.

The protein belongs to the class-II aminoacyl-tRNA synthetase family. Type-1 seryl-tRNA synthetase subfamily. As to quaternary structure, homodimer. The tRNA molecule binds across the dimer.

Its subcellular location is the cytoplasm. It catalyses the reaction tRNA(Ser) + L-serine + ATP = L-seryl-tRNA(Ser) + AMP + diphosphate + H(+). The catalysed reaction is tRNA(Sec) + L-serine + ATP = L-seryl-tRNA(Sec) + AMP + diphosphate + H(+). Its pathway is aminoacyl-tRNA biosynthesis; selenocysteinyl-tRNA(Sec) biosynthesis; L-seryl-tRNA(Sec) from L-serine and tRNA(Sec): step 1/1. Catalyzes the attachment of serine to tRNA(Ser). Is also able to aminoacylate tRNA(Sec) with serine, to form the misacylated tRNA L-seryl-tRNA(Sec), which will be further converted into selenocysteinyl-tRNA(Sec). The protein is Serine--tRNA ligase of Synechococcus sp. (strain CC9605).